The primary structure comprises 407 residues: DNA primase DnaG (407 aa).

The Toprim domain maps to 172–248 (DWIIVVEGRA…HIDYVARAPP (77 aa)). E178, D222, and D224 together coordinate Mg(2+). The interval 279 to 304 (AGAEKTEAAAPPPQQPTAPPAAPSQQ) is disordered. The segment covering 288–300 (APPPQQPTAPPAA) has biased composition (pro residues).

The protein belongs to the archaeal DnaG primase family. As to quaternary structure, forms a ternary complex with MCM helicase and DNA. Component of the archaeal exosome complex. It depends on Mg(2+) as a cofactor.

It carries out the reaction ssDNA + n NTP = ssDNA/pppN(pN)n-1 hybrid + (n-1) diphosphate.. In terms of biological role, RNA polymerase that catalyzes the synthesis of short RNA molecules used as primers for DNA polymerase during DNA replication. Also part of the exosome, which is a complex involved in RNA degradation. Acts as a poly(A)-binding protein that enhances the interaction between heteromeric, adenine-rich transcripts and the exosome. The protein is DNA primase DnaG of Pyrobaculum calidifontis (strain DSM 21063 / JCM 11548 / VA1).